We begin with the raw amino-acid sequence, 469 residues long: Trigger factor (469 aa).

Residues 165-250 (GDRVTIDYIG…VKAVCKSDEL (86 aa)) enclose the PPIase FKBP-type domain. Basic and acidic residues predominate over residues 444 to 460 (DLTEKKPLKKKTAEKVS). A disordered region spans residues 444–469 (DLTEKKPLKKKTAEKVSTKKKAPKKS).

It belongs to the FKBP-type PPIase family. Tig subfamily.

It is found in the cytoplasm. It catalyses the reaction [protein]-peptidylproline (omega=180) = [protein]-peptidylproline (omega=0). Functionally, involved in protein export. Acts as a chaperone by maintaining the newly synthesized protein in an open conformation. Functions as a peptidyl-prolyl cis-trans isomerase. The chain is Trigger factor from Bartonella henselae (strain ATCC 49882 / DSM 28221 / CCUG 30454 / Houston 1) (Rochalimaea henselae).